Here is a 356-residue protein sequence, read N- to C-terminus: Caspase activity and apoptosis inhibitor 1 (356 aa).

Over residues 1–14 (MTGKKSSREKRRKR) the composition is skewed to basic residues. Disordered regions lie at residues 1–24 (MTGK…ASLA) and 54–80 (VAGG…GSLQ). At serine 68 the chain carries Phosphoserine. Threonine 69 is modified (phosphothreonine). Lysine 84 is covalently cross-linked (Glycyl lysine isopeptide (Lys-Gly) (interchain with G-Cter in SUMO2)). Phosphoserine is present on residues serine 100 and serine 183. The segment at 208–234 (DSTSSLRENKQPEVLESKQGKGEDSDV) is disordered. Residues 214 to 231 (RENKQPEVLESKQGKGED) are compositionally biased toward basic and acidic residues. Positions 276–306 (ENTVQSEAGQIDDLERDIEKSVNEILGLAES) form a coiled coil. Serine 307 carries the phosphoserine modification.

Its function is as follows. Anti-apoptotic protein that modulates a caspase-10 dependent mitochondrial caspase-3/9 feedback amplification loop. This is Caspase activity and apoptosis inhibitor 1 (Caap1) from Mus musculus (Mouse).